The chain runs to 473 residues: Aspartyl/glutamyl-tRNA(Asn/Gln) amidotransferase subunit B (473 aa).

It belongs to the GatB/GatE family. GatB subfamily. As to quaternary structure, heterotrimer of A, B and C subunits.

It carries out the reaction L-glutamyl-tRNA(Gln) + L-glutamine + ATP + H2O = L-glutaminyl-tRNA(Gln) + L-glutamate + ADP + phosphate + H(+). It catalyses the reaction L-aspartyl-tRNA(Asn) + L-glutamine + ATP + H2O = L-asparaginyl-tRNA(Asn) + L-glutamate + ADP + phosphate + 2 H(+). Functionally, allows the formation of correctly charged Asn-tRNA(Asn) or Gln-tRNA(Gln) through the transamidation of misacylated Asp-tRNA(Asn) or Glu-tRNA(Gln) in organisms which lack either or both of asparaginyl-tRNA or glutaminyl-tRNA synthetases. The reaction takes place in the presence of glutamine and ATP through an activated phospho-Asp-tRNA(Asn) or phospho-Glu-tRNA(Gln). This chain is Aspartyl/glutamyl-tRNA(Asn/Gln) amidotransferase subunit B, found in Wolbachia pipientis subsp. Culex pipiens (strain wPip).